Here is a 531-residue protein sequence, read N- to C-terminus: Outer dynein arm-docking complex subunit 4 (531 aa).

TPR repeat units follow at residues 15–48 (FSTY…QPEE), 50–82 (NCLV…ENDF), and 83–116 (FKGL…RPEF). Residues 161-185 (KQKAQVKVQKKDSKQQKKVDPERSQ) are disordered. Residues 169–185 (QKKDSKQQKKVDPERSQ) are compositionally biased toward basic and acidic residues. 5 TPR repeats span residues 275-307 (VKSL…VERW), 320-353 (GSLH…AEKY), 360-393 (SRAL…ANSS), 397-430 (TWLY…ADAA), and 437-470 (LNAC…ARLL). A disordered region spans residues 487 to 531 (KQGMEEQQESEQNNDENDNLRADGNTARDEEEEDVHVQRTEEDEG). The span at 492–503 (EQQESEQNNDEN) shows a compositional bias: acidic residues. Residues 521–531 (VHVQRTEEDEG) are compositionally biased toward basic and acidic residues.

Component of the outer dynein arm-docking complex. As to expression, in the mucociliary epithelium, specifically expressed in ciliated cells.

It is found in the cytoplasm. Its subcellular location is the cytoskeleton. It localises to the cilium axoneme. In terms of biological role, component of the outer dynein arm-docking complex (ODA-DC) that mediates outer dynein arms (ODA) binding onto the doublet microtubule. Plays an essential role for the assembly of ODA-DC and in the docking of ODA in ciliary axoneme. Its function is as follows. Required for the docking of the outer dynein arm to cilia, hence plays an essential role in cilia motility. This chain is Outer dynein arm-docking complex subunit 4 (odad4), found in Xenopus laevis (African clawed frog).